Reading from the N-terminus, the 438-residue chain is Asparagine--tRNA ligase (438 aa).

Belongs to the class-II aminoacyl-tRNA synthetase family. In terms of assembly, homodimer.

Its subcellular location is the cytoplasm. It carries out the reaction tRNA(Asn) + L-asparagine + ATP = L-asparaginyl-tRNA(Asn) + AMP + diphosphate + H(+). In Thermus thermophilus (strain ATCC BAA-163 / DSM 7039 / HB27), this protein is Asparagine--tRNA ligase.